A 191-amino-acid polypeptide reads, in one-letter code: uncharacterized protein (191 aa).

This is an uncharacterized protein from Schizosaccharomyces pombe (strain 972 / ATCC 24843) (Fission yeast).